The primary structure comprises 437 residues: Probable inactive DNA (cytosine-5)-methyltransferase DRM1B (437 aa).

UBA domains lie at 20–60 (SAPS…LLQL) and 120–164 (EMSE…IYAP). The SAM-dependent MTase DRM-type domain occupies 243 to 437 (VHRNLPDHAL…LIQLHTTSLC (195 aa)).

It belongs to the class I-like SAM-binding methyltransferase superfamily. DRM-methyltransferase family.

It localises to the nucleus. Its function is as follows. Involved in de novo DNA methylation. Involved in RNA-directed DNA methylation (RdDM). The polypeptide is Probable inactive DNA (cytosine-5)-methyltransferase DRM1B (Oryza sativa subsp. japonica (Rice)).